Here is an 871-residue protein sequence, read N- to C-terminus: Metabotropic glutamate receptor 6 (871 aa).

An N-terminal signal peptide occupies residues 1–23 (MGRLRVLLLWLAWWLSQAGIAHG). Residues 24-579 (AGSVRLAGGL…VVRLTWSSPW (556 aa)) lie on the Extracellular side of the membrane. A disulfide bridge connects residues Cys51 and Cys93. Residues Ser148, 169–171 (AST), and Tyr219 each bind L-glutamate. Cystine bridges form between Cys238/Cys530, Cys361/Cys377, Cys417/Cys424, Cys512/Cys531, Cys516/Cys534, Cys537/Cys549, and Cys552/Cys565. An N-linked (GlcNAc...) asparagine glycan is attached at Asn290. Asp301 provides a ligand contact to L-glutamate. Position 394 (Lys394) interacts with L-glutamate. Residues Asn445 and Asn473 are each glycosylated (N-linked (GlcNAc...) asparagine). N-linked (GlcNAc...) asparagine glycosylation is present at Asn561. A helical membrane pass occupies residues 580 to 602 (AALPLLLAVLGIMATTTIIATFM). Topologically, residues 603 to 616 (RHNDTPIVRASGRE) are cytoplasmic. The chain crosses the membrane as a helical span at residues 617–637 (LSYVLLTGIFLIYAITFLMVA). The Extracellular segment spans residues 638–648 (EPCAAVCASRR). The chain crosses the membrane as a helical span at residues 649–667 (LLLGLGTTLSYSALLTKTN). At 668–691 (RIYRIFEQGKRSVTPPPFISPTSQ) the chain is on the cytoplasmic side. Residues 692–712 (LVITFGLTSLQVVGVIAWLGA) traverse the membrane as a helical segment. The Extracellular portion of the chain corresponds to 713–742 (QPPHSVIDYEEQRTVDPEQARGVLKCDMSD). The chain crosses the membrane as a helical span at residues 743 to 764 (LSLIGCLGYSLLLMVTCTVYAI). Topologically, residues 765–777 (KARGVPETFNEAK) are cytoplasmic. The chain crosses the membrane as a helical span at residues 778 to 800 (PIGFTMYTTCIIWLAFVPIFFGT). Over 801–813 (AQSAEKIYIQTTT) the chain is Extracellular. Residues 814-839 (LTVSLSLSASVSLGMLYVPKTYVILF) form a helical membrane-spanning segment. Residues 840–871 (HPEQNVQKRKRSLKKTSTMAAPPKSENSEDAK) lie on the Cytoplasmic side of the membrane. Positions 848-871 (RKRSLKKTSTMAAPPKSENSEDAK) are disordered.

Belongs to the G-protein coupled receptor 3 family. Homodimer. Interacts with GPR179. Interacts with photoreceptor synaptic protein LRIT1 (via its N-terminal extracellular domain). Detected in the outer plexiform layer in retina (at protein level).

It localises to the cell membrane. The protein resides in the endoplasmic reticulum membrane. Its subcellular location is the golgi apparatus membrane. The protein localises to the cell projection. It is found in the dendrite. G-protein coupled receptor for glutamate. Ligand binding causes a conformation change that triggers signaling via guanine nucleotide-binding proteins (G proteins) and modulates the activity of down-stream effectors, such as adenylate cyclase. Signaling inhibits adenylate cyclase activity. Signaling stimulates TRPM1 channel activity and Ca(2+) uptake. Required for normal vision. The polypeptide is Metabotropic glutamate receptor 6 (Grm6) (Mus musculus (Mouse)).